The primary structure comprises 489 residues: 3-octaprenyl-4-hydroxybenzoate carboxy-lyase (489 aa).

Asn-172 contributes to the Mn(2+) binding site. Prenylated FMN contacts are provided by residues 175–177, 189–191, and 194–195; these read IYR, RWL, and RG. Glu-238 contributes to the Mn(2+) binding site. The active-site Proton donor is Asp-287.

The protein belongs to the UbiD family. In terms of assembly, homohexamer. Requires prenylated FMN as cofactor. Mn(2+) serves as cofactor.

The protein resides in the cell membrane. The catalysed reaction is a 4-hydroxy-3-(all-trans-polyprenyl)benzoate + H(+) = a 2-(all-trans-polyprenyl)phenol + CO2. It functions in the pathway cofactor biosynthesis; ubiquinone biosynthesis. Catalyzes the decarboxylation of 3-octaprenyl-4-hydroxy benzoate to 2-octaprenylphenol, an intermediate step in ubiquinone biosynthesis. This chain is 3-octaprenyl-4-hydroxybenzoate carboxy-lyase, found in Tolumonas auensis (strain DSM 9187 / NBRC 110442 / TA 4).